The primary structure comprises 600 residues: Potassium-transporting ATPase potassium-binding subunit (600 aa).

Helical transmembrane passes span 6 to 26 (IILLAVFLLVLLVLAYPLGTY), 65 to 85 (GYAIALLVFNVLGTFFVYAVQ), 136 to 156 (ALSGQNFFSAATGIAVIYALI), 179 to 199 (LYVLLPLSVIVAVVLMSQGVI), 283 to 303 (FSNLVEMLAIFLIPAALCFTF), 314 to 334 (WAILGAMTLLFVVLTAVVMGA), 367 to 387 (FGISASTLFAAVTTAASCGAV), 419 to 439 (GLYGMLVFAILAVFIAGLMIG), 458 to 478 (SLVILVTPCLVLLGTAIAVVL), 523 to 543 (VMLAIAMWFGRFAVIVPVLAI), and 566 to 586 (LFIALLVGTVLLVGVLNYVPA).

This sequence belongs to the KdpA family. The system is composed of three essential subunits: KdpA, KdpB and KdpC.

It is found in the cell inner membrane. Part of the high-affinity ATP-driven potassium transport (or Kdp) system, which catalyzes the hydrolysis of ATP coupled with the electrogenic transport of potassium into the cytoplasm. This subunit binds the periplasmic potassium ions and delivers the ions to the membrane domain of KdpB through an intramembrane tunnel. The polypeptide is Potassium-transporting ATPase potassium-binding subunit (Janthinobacterium sp. (strain Marseille) (Minibacterium massiliensis)).